Reading from the N-terminus, the 158-residue chain is E3 ubiquitin ligase complex SCF subunit sconC (158 aa).

Residues 100 to 158 (ILAANYLDIKALLDVGCKTVANMIKGKSPEEIRKTFNIQNDFTPEEEDQIRRENEWAEE) form an interaction with the F-box domain of F-box proteins region.

It belongs to the SKP1 family. In terms of assembly, component of the SCF (SKP1-CUL1-F-box protein) E3 ubiquitin ligase complexes.

It participates in protein modification; protein ubiquitination. In terms of biological role, essential component of the SCF (SKP1-CUL1-F-box protein) E3 ubiquitin ligase complexes, which mediate the ubiquitination and subsequent proteasomal degradation of target proteins. Controls sulfur metabolite repression, probably by mediating the inactivation or degradation of the metR transcription factor. This Aspergillus fumigatus (strain CBS 144.89 / FGSC A1163 / CEA10) (Neosartorya fumigata) protein is E3 ubiquitin ligase complex SCF subunit sconC (sconC).